The chain runs to 121 residues: Large ribosomal subunit protein uL24 (121 aa).

The protein belongs to the universal ribosomal protein uL24 family. As to quaternary structure, part of the 50S ribosomal subunit.

In terms of biological role, one of two assembly initiator proteins, it binds directly to the 5'-end of the 23S rRNA, where it nucleates assembly of the 50S subunit. Its function is as follows. Located at the polypeptide exit tunnel on the outside of the subunit. The sequence is that of Large ribosomal subunit protein uL24 from Methanocorpusculum labreanum (strain ATCC 43576 / DSM 4855 / Z).